Consider the following 586-residue polypeptide: Kelch-like protein 7 (586 aa).

Residues 44–111 form the BTB domain; the sequence is CDVILTVQER…AYTARISVNS (68 aa). In terms of domain architecture, BACK spans 146-248; sequence CLGISVLAEC…SKNFLSKTVQ (103 aa). Kelch repeat units lie at residues 294 to 336, 337 to 382, 383 to 430, 431 to 481, 483 to 528, and 530 to 575; these read RIAL…FWDN, VVYI…AAEG, KIYT…EANG, LIYV…FVKD, IFAV…AVGS, and IYVL…CVVD.

Homodimer. Component of the BCR(KLHL7) E3 ubiquitin ligase complex, at least composed of CUL3 and KLHL7 and RBX1.

It is found in the nucleus. The protein resides in the cytoplasm. Its pathway is protein modification; protein ubiquitination. Substrate-specific adapter of a BCR (BTB-CUL3-RBX1) E3 ubiquitin ligase complex. The BCR(KLHL7) complex acts by mediating ubiquitination and subsequent degradation of substrate proteins. Probably mediates 'Lys-48'-linked ubiquitination. This Mus musculus (Mouse) protein is Kelch-like protein 7 (Klhl7).